Here is a 212-residue protein sequence, read N- to C-terminus: Proteasome subunit beta 2 (212 aa).

Positions 1-13 (MSVDEKVARALKG) are cleaved as a propeptide — removed in mature form; by autocatalysis. Residue Thr14 is the Nucleophile of the active site.

It belongs to the peptidase T1B family. As to quaternary structure, the 20S proteasome core is composed of 14 alpha and 14 beta subunits that assemble into four stacked heptameric rings, resulting in a barrel-shaped structure. The two inner rings, each composed of seven catalytic beta subunits, are sandwiched by two outer rings, each composed of seven alpha subunits. The catalytic chamber with the active sites is on the inside of the barrel. Has a gated structure, the ends of the cylinder being occluded by the N-termini of the alpha-subunits. Is capped at one or both ends by the proteasome regulatory ATPase, PAN.

It is found in the cytoplasm. The enzyme catalyses Cleavage of peptide bonds with very broad specificity.. With respect to regulation, the formation of the proteasomal ATPase PAN-20S proteasome complex, via the docking of the C-termini of PAN into the intersubunit pockets in the alpha-rings, triggers opening of the gate for substrate entry. Interconversion between the open-gate and close-gate conformations leads to a dynamic regulation of the 20S proteasome proteolysis activity. Component of the proteasome core, a large protease complex with broad specificity involved in protein degradation. In Ignicoccus hospitalis (strain KIN4/I / DSM 18386 / JCM 14125), this protein is Proteasome subunit beta 2.